A 350-amino-acid polypeptide reads, in one-letter code: Ion-translocating oxidoreductase complex subunit D (350 aa).

Helical transmembrane passes span 37–57, 68–88, 89–109, and 120–140; these read YFFGFGVLIQVMLAIVVALTA, AVLSTISDNSALLTAILIGVA, IPPIAPWWLVVIGTLFAIVLV, and IFNPAMAAYVMLLISFPVQMT. Threonine 185 carries the FMN phosphoryl threonine modification. The next 5 membrane-spanning stretches (helical) occupy residues 212–232, 239–259, 265–285, 291–311, and 315–335; these read GYGVGWFWVNMAYLAGGLIML, WHISFAILGSLFVCSSFGYLL, VGPLLQLFSGATMIAAFFIAT, ATSVKGRLLFGTLIGVMVYVI, and GGYPDAFAFAVLLANLCAPFI.

This sequence belongs to the NqrB/RnfD family. In terms of assembly, the complex is composed of six subunits: RnfA, RnfB, RnfC, RnfD, RnfE and RnfG. It depends on FMN as a cofactor.

The protein resides in the cell inner membrane. In terms of biological role, part of a membrane-bound complex that couples electron transfer with translocation of ions across the membrane. This chain is Ion-translocating oxidoreductase complex subunit D, found in Shewanella pealeana (strain ATCC 700345 / ANG-SQ1).